Here is a 285-residue protein sequence, read N- to C-terminus: Nucleotide-binding protein PSPPH_4154 (285 aa).

8 to 15 serves as a coordination point for ATP; that stretch reads GRSGSGKS. 60–63 lines the GTP pocket; sequence DARN.

The protein belongs to the RapZ-like family.

In terms of biological role, displays ATPase and GTPase activities. The polypeptide is Nucleotide-binding protein PSPPH_4154 (Pseudomonas savastanoi pv. phaseolicola (strain 1448A / Race 6) (Pseudomonas syringae pv. phaseolicola (strain 1448A / Race 6))).